A 468-amino-acid chain; its full sequence is Uronate isomerase (468 aa).

The protein belongs to the metallo-dependent hydrolases superfamily. Uronate isomerase family.

It carries out the reaction D-glucuronate = D-fructuronate. It catalyses the reaction aldehydo-D-galacturonate = keto-D-tagaturonate. The protein operates within carbohydrate metabolism; pentose and glucuronate interconversion. In Bacteroides fragilis (strain ATCC 25285 / DSM 2151 / CCUG 4856 / JCM 11019 / LMG 10263 / NCTC 9343 / Onslow / VPI 2553 / EN-2), this protein is Uronate isomerase.